Reading from the N-terminus, the 142-residue chain is Baculoviral IAP repeat-containing protein 5 (142 aa).

The stretch at 18–88 is one BIR repeat; that stretch reads RVSTFKNWPF…KHSSGCAFLS (71 aa). The residue at position 20 (serine 20) is a Phosphoserine; by AURKC. Lysine 23 carries the N6-acetyllysine modification. Phosphothreonine; by CDK1 and CDK15 is present on threonine 34. At threonine 48 the chain carries Phosphothreonine; by CK2; in vitro. Cysteine 57, cysteine 60, histidine 77, and cysteine 84 together coordinate Zn(2+). N6-acetyllysine is present on residues lysine 90, lysine 110, lysine 112, and lysine 115. At threonine 117 the chain carries Phosphothreonine; by AURKB.

Belongs to the IAP family. In terms of assembly, monomer or homodimer. Exists as a homodimer in the apo state and as a monomer in the CPC-bound state. The monomer protects cells against apoptosis more efficiently than the dimer. Only the dimeric form is capable of enhancing tubulin stability in cells. When phosphorylated, interacts with LAMTOR5/HBXIP; the resulting complex binds pro-CASP9, as well as active CASP9, but much less efficiently. Component of the chromosomal passenger complex (CPC) composed of at least BIRC5/survivin, CDCA8/borealin, INCENP, AURKB or AURKC; in the complex forms a triple-helix bundle-based subcomplex with INCENP and CDCA8. Interacts with JTB. Interacts (via BIR domain) with histone H3 phosphorylated at 'Thr-3' (H3pT3). Interacts with EVI5. Interacts with GTP-bound RAN in both the S and M phases of the cell cycle. Interacts with USP9X. Interacts with tubulin. Interacts with BIRC2/c-IAP1. The monomeric form interacts with XIAP/BIRC4. Both the dimeric and monomeric form can interact with DIABLO/SMAC. Interacts with BIRC6/bruce. Interacts with FBXL7; this interaction facilitates the polyubiquitination and subsequent proteasomal degradation of BIRC5 by the SCF(FBXL7) E3 ubiquitin-protein ligase complex. Post-translationally, ubiquitinated by the Cul9-RING ubiquitin-protein ligase complex, leading to its degradation. Ubiquitination is required for centrosomal targeting. Deubiquitinated by USP35 or USP38; leading to stabilization. In terms of processing, in vitro phosphorylation at Thr-117 by AURKB prevents interaction with INCENP and localization to mitotic chromosomes. Phosphorylation at Thr-48 by CK2 is critical for its mitotic and anti-apoptotic activities. Phosphorylation at Thr-34 by CDK15 is critical for its anti-apoptotic activity. Phosphorylation at Ser-20 by AURKC is critical for regulation of proper chromosome alignment and segregation, and possibly cytokinesis. As to expression, expressed in spleen, lung, brain, heart, kidney and intestine (at protein level). Expressed in cochlea including the organ of Corti, the lateral wall, the interdental cells of the Limbus as well as in cells of the cochlear nerve and the spiral ganglions (at protein level). Also expressed in Schwann cells (at protein level). Not expressed in cells of the inner and outer sulcus or the Reissner's membrane (at protein level).

Its subcellular location is the cytoplasm. The protein localises to the nucleus. It localises to the chromosome. The protein resides in the centromere. It is found in the cytoskeleton. Its subcellular location is the spindle. The protein localises to the kinetochore. It localises to the midbody. Its function is as follows. Multitasking protein that has dual roles in promoting cell proliferation and preventing apoptosis. Component of a chromosome passage protein complex (CPC) which is essential for chromosome alignment and segregation during mitosis and cytokinesis. Acts as an important regulator of the localization of this complex; directs CPC movement to different locations from the inner centromere during prometaphase to midbody during cytokinesis and participates in the organization of the center spindle by associating with polymerized microtubules. Involved in the recruitment of CPC to centromeres during early mitosis via association with histone H3 phosphorylated at 'Thr-3' (H3pT3) during mitosis. The complex with RAN plays a role in mitotic spindle formation by serving as a physical scaffold to help deliver the RAN effector molecule TPX2 to microtubules. May counteract a default induction of apoptosis in G2/M phase. The acetylated form represses STAT3 transactivation of target gene promoters. May play a role in neoplasia. Inhibitor of CASP3 and CASP7. Essential for the maintenance of mitochondrial integrity and function. This Cavia porcellus (Guinea pig) protein is Baculoviral IAP repeat-containing protein 5.